The chain runs to 367 residues: Biotin synthase (367 aa).

In terms of domain architecture, Radical SAM core spans 67 to 291 (NAVQISTLLS…IAVTRICCPS (225 aa)). The [4Fe-4S] cluster site is built by Cys82, Cys86, and Cys89. Positions 128, 159, 219, and 295 each coordinate [2Fe-2S] cluster.

Belongs to the radical SAM superfamily. Biotin synthase family. Homodimer. It depends on [4Fe-4S] cluster as a cofactor. Requires [2Fe-2S] cluster as cofactor.

The catalysed reaction is (4R,5S)-dethiobiotin + (sulfur carrier)-SH + 2 reduced [2Fe-2S]-[ferredoxin] + 2 S-adenosyl-L-methionine = (sulfur carrier)-H + biotin + 2 5'-deoxyadenosine + 2 L-methionine + 2 oxidized [2Fe-2S]-[ferredoxin]. It participates in cofactor biosynthesis; biotin biosynthesis; biotin from 7,8-diaminononanoate: step 2/2. Its function is as follows. Catalyzes the conversion of dethiobiotin (DTB) to biotin by the insertion of a sulfur atom into dethiobiotin via a radical-based mechanism. The protein is Biotin synthase of Psychrobacter sp. (strain PRwf-1).